Consider the following 192-residue polypeptide: Thioredoxin-like 3-2, chloroplastic (192 aa).

The transit peptide at Met1 to Arg55 directs the protein to the chloroplast. Residues Leu66–Ile191 enclose the Thioredoxin domain. Active-site nucleophile residues include Cys110 and Cys113. Residues Cys110 and Cys113 are joined by a disulfide bond.

This sequence belongs to the thioredoxin family.

The protein resides in the plastid. It is found in the chloroplast stroma. In terms of biological role, probable thiol-disulfide oxidoreductase that may participate in various redox reactions. This chain is Thioredoxin-like 3-2, chloroplastic (WCRKC2), found in Arabidopsis thaliana (Mouse-ear cress).